The following is a 403-amino-acid chain: L-cysteine:1D-myo-inositol 2-amino-2-deoxy-alpha-D-glucopyranoside ligase (403 aa).

Residue C43 coordinates Zn(2+). L-cysteinyl-5'-AMP contacts are provided by residues 43–46, T58, 81–83, and W223; these read CGIT and NVT. Positions 45-55 match the 'HIGH' region motif; that stretch reads ITPYDATHLGH. Residue C227 participates in Zn(2+) binding. 245–247 is a binding site for L-cysteinyl-5'-AMP; it reads GAD. Position 252 (H252) interacts with Zn(2+). V278 contacts L-cysteinyl-5'-AMP. The 'KMSKS' region motif lies at 284 to 288; that stretch reads KMSKS.

It belongs to the class-I aminoacyl-tRNA synthetase family. MshC subfamily. Monomer. Zn(2+) is required as a cofactor.

The catalysed reaction is 1D-myo-inositol 2-amino-2-deoxy-alpha-D-glucopyranoside + L-cysteine + ATP = 1D-myo-inositol 2-(L-cysteinylamino)-2-deoxy-alpha-D-glucopyranoside + AMP + diphosphate + H(+). Functionally, catalyzes the ATP-dependent condensation of GlcN-Ins and L-cysteine to form L-Cys-GlcN-Ins. The sequence is that of L-cysteine:1D-myo-inositol 2-amino-2-deoxy-alpha-D-glucopyranoside ligase from Acidothermus cellulolyticus (strain ATCC 43068 / DSM 8971 / 11B).